The primary structure comprises 727 residues: UvrABC system protein C (727 aa).

Positions 16–95 (VDPGVYKFRD…IKEFDPRFNV (80 aa)) constitute a GIY-YIG domain. Residues 208–243 (DRLVRQLEARMQEASEELDFETAARLRDDVGALRRA) enclose the UVR domain. Disordered regions lie at residues 503-527 (DADQVSGGDGGDLAPEAAIDPQTGR) and 679-727 (SADV…TGVE). Positions 701 to 711 (NGADIPREPVE) are enriched in basic and acidic residues. Residues 718-727 (QSASQRTGVE) are compositionally biased toward polar residues.

The protein belongs to the UvrC family. Interacts with UvrB in an incision complex.

It is found in the cytoplasm. Its function is as follows. The UvrABC repair system catalyzes the recognition and processing of DNA lesions. UvrC both incises the 5' and 3' sides of the lesion. The N-terminal half is responsible for the 3' incision and the C-terminal half is responsible for the 5' incision. This chain is UvrABC system protein C, found in Rhodococcus jostii (strain RHA1).